The sequence spans 282 residues: Small ribosomal subunit protein uS2 (282 aa).

The disordered stretch occupies residues 245–265; sequence AEEAVEELPLPTGEAQDEASS.

This sequence belongs to the universal ribosomal protein uS2 family.

This chain is Small ribosomal subunit protein uS2, found in Chlamydia trachomatis serovar A (strain ATCC VR-571B / DSM 19440 / HAR-13).